A 46-amino-acid chain; its full sequence is Protein YmiA (46 aa).

Residues 22 to 42 (AWLAVFLGSALFWVVVALLIW) traverse the membrane as a helical segment.

It localises to the cell inner membrane. In Escherichia coli (strain K12), this protein is Protein YmiA (ymiA).